Here is a 263-residue protein sequence, read N- to C-terminus: Small ribosomal subunit protein eS4 (263 aa).

Residues 42–105 (LPLIIFLRNR…GENFRLIYDV (64 aa)) enclose the S4 RNA-binding domain.

The protein belongs to the eukaryotic ribosomal protein eS4 family. Component of the small ribosomal subunit. Part of the small subunit (SSU) processome, composed of more than 70 proteins and the RNA chaperone small nucleolar RNA (snoRNA) U3.

The protein resides in the cytoplasm. It localises to the nucleus. It is found in the nucleolus. Functionally, component of the small ribosomal subunit. The ribosome is a large ribonucleoprotein complex responsible for the synthesis of proteins in the cell. Part of the small subunit (SSU) processome, first precursor of the small eukaryotic ribosomal subunit. During the assembly of the SSU processome in the nucleolus, many ribosome biogenesis factors, an RNA chaperone and ribosomal proteins associate with the nascent pre-rRNA and work in concert to generate RNA folding, modifications, rearrangements and cleavage as well as targeted degradation of pre-ribosomal RNA by the RNA exosome. In Danio rerio (Zebrafish), this protein is Small ribosomal subunit protein eS4 (rps4x).